Reading from the N-terminus, the 113-residue chain is Cysteine proteinase inhibitor 6 (113 aa).

The first 18 residues, 1 to 18 (MAMTTRTLLLAAVCAAAA), serve as a signal peptide directing secretion. A Secondary area of contact motif is present at residues 65–69 (QVVSG).

Belongs to the cystatin family. Phytocystatin subfamily.

It is found in the secreted. In terms of biological role, specific inhibitor of cysteine proteinases. Probably involved in the regulation of endogenous processes and in defense against pests and pathogens. This Oryza sativa subsp. japonica (Rice) protein is Cysteine proteinase inhibitor 6.